A 259-amino-acid polypeptide reads, in one-letter code: Dihydroorotate dehydrogenase B (NAD(+)), electron transfer subunit (259 aa).

The FAD-binding FR-type domain occupies 2–102 (MQKQNMIVVN…LGPLGHGFPL (101 aa)). FAD-binding positions include 53-56 (RPIS), 70-72 (LYR), and 77-78 (GT). Cysteine 221, cysteine 226, cysteine 229, and cysteine 246 together coordinate [2Fe-2S] cluster.

It belongs to the PyrK family. As to quaternary structure, heterotetramer of 2 PyrK and 2 PyrD type B subunits. The cofactor is [2Fe-2S] cluster. FAD is required as a cofactor.

Its pathway is pyrimidine metabolism; UMP biosynthesis via de novo pathway; orotate from (S)-dihydroorotate (NAD(+) route): step 1/1. Responsible for channeling the electrons from the oxidation of dihydroorotate from the FMN redox center in the PyrD type B subunit to the ultimate electron acceptor NAD(+). The chain is Dihydroorotate dehydrogenase B (NAD(+)), electron transfer subunit from Bacillus cereus (strain B4264).